A 66-amino-acid polypeptide reads, in one-letter code: Phylloseptin-S2 (66 aa).

Positions 1 to 22 (MAFLKKSLFLVLFLGLVSLSIC) are cleaved as a signal peptide. The propeptide occupies 23-46 (EEEKRETEEEEHDQEEDDKSEEKR). A disordered region spans residues 25-44 (EKRETEEEEHDQEEDDKSEE). A compositionally biased stretch (acidic residues) spans 30–41 (EEEEHDQEEDDK). Residue phenylalanine 65 is modified to Phenylalanine amide.

In terms of tissue distribution, expressed by the skin glands.

The protein resides in the secreted. Its subcellular location is the target cell membrane. Its function is as follows. Antimicrobial peptide with high activity against Gram-positive bacteria, moderate activity against Gram-negative bacteria, and moderate activity against fungi. Acts by causing bacterial membrane disruption inducing leakage of the intracellular content followed by cell death. It adopts an alpha-helical amphipathic structure in membrane environments. Also shows highly potent antiparasitic activity against Leishmania species. Shows moderate hemolytic activity on human erythrocytes (LC(50)=25 uM). Is also active on human monocytes (IC(50)=22.5 uM). This Phyllomedusa sauvagei (Sauvage's leaf frog) protein is Phylloseptin-S2.